The sequence spans 906 residues: Envelope glycoprotein B (906 aa).

An N-terminal signal peptide occupies residues 1–31 (MESRIWCLVVCVNLCIVCLGAAVSSSSTSHA). A compositionally biased stretch (low complexity) spans 29–46 (SHATSSTHNGSHTSRTTS). Residues 29-51 (SHATSSTHNGSHTSRTTSAQTRS) form a disordered region. The Virion surface portion of the chain corresponds to 32-750 (TSSTHNGSHT…EGVATFLKNP (719 aa)). N-linked (GlcNAc...) asparagine; by host glycans are attached at residues Asn37, Asn68, Asn73, and Asn85. 5 disulfides stabilise this stretch: Cys94–Cys550, Cys111–Cys506, Cys185–Cys250, Cys246–Cys250, and Cys344–Cys391. Residues 152–158 (SYAYIYT) form an involved in fusion and/or binding to host membrane region. N-linked (GlcNAc...) asparagine; by host glycosylation occurs at Asn208. The interval 237–244 (GSTWLYRE) is involved in fusion and/or binding to host membrane. N-linked (GlcNAc...) asparagine; by host glycans are attached at residues Asn281, Asn286, Asn302, Asn341, Asn383, Asn405, Asn409, Asn417, Asn447, Asn452, Asn464, Asn465, Asn554, and Asn585. Cys573 and Cys610 form a disulfide bridge. Hydrophobic membrane proximal region stretches follow at residues 696–748 (VEDK…TFLK) and 727–747 (VAIG…ATFL). Residues 751–771 (FGAFTIILVAIAVVIITYLIY) form a helical membrane-spanning segment. At 772-906 (TRQRRLCTQP…LKDSDEEENV (135 aa)) the chain is on the intravirion side. Composition is skewed to polar residues over residues 797–809 (VTSG…SLQA) and 859–876 (RAQQ…GTQD). 2 disordered regions span residues 797-837 (VTSG…TAAP) and 856-906 (AEQR…EENV). Over residues 877–886 (KGQKPNLLDR) the composition is skewed to basic and acidic residues. The Internalization motif signature appears at 894–897 (YRHL).

It belongs to the herpesviridae glycoprotein B family. In terms of assembly, homotrimer; disulfide-linked. Binds to heparan sulfate proteoglycans. Interacts with gH/gL heterodimer. Interacts with host TLR1 and TLR2. Interacts with host C-type lectin CD209/DC-SIGN. Interacts with host ITGB1, EGFR, and PDGFRA. In terms of processing, a proteolytic cleavage by host furin generates two subunits that remain linked by disulfide bonds.

The protein resides in the virion membrane. Its subcellular location is the host cell membrane. The protein localises to the host endosome membrane. It localises to the host Golgi apparatus membrane. Envelope glycoprotein that plays a role in host cell entry, cell to-cell virus transmission, and fusion of infected cells. May be involved in the initial attachment via binding to heparan sulfate together with the gM/gN complex that binds heparin with higher affinity. Interacts with host integrin ITGB1, PDGFRA and EGFR that likely serve as postattachment entry receptors. Also participates in the fusion of viral and cellular membranes leading to virus entry into the host cell. Membrane fusion is mediated by the fusion machinery composed at least of gB and the heterodimer gH/gL. This is Envelope glycoprotein B from Human cytomegalovirus (strain AD169) (HHV-5).